The chain runs to 95 residues: Ferredoxin-4 (95 aa).

One can recognise a 2Fe-2S ferredoxin-type domain in the interval 2-95; it reads DKATLTFTDV…LGGAVKVRPA (94 aa). Residues Cys-38, Cys-43, Cys-46, and Cys-81 each contribute to the [2Fe-2S] cluster site.

It belongs to the 2Fe2S plant-type ferredoxin family. Requires [2Fe-2S] cluster as cofactor.

In terms of biological role, ferredoxins are iron-sulfur proteins that transfer electrons in a wide variety of metabolic reactions. This ferredoxin is required for nitrogen fixation. In Rhodobacter capsulatus (Rhodopseudomonas capsulata), this protein is Ferredoxin-4 (fdxC).